We begin with the raw amino-acid sequence, 235 residues long: Purine nucleoside phosphorylase DeoD-type (235 aa).

Residue H4 participates in a purine D-ribonucleoside binding. Phosphate is bound by residues G20, R24, R43, and 87-90 (RVGT). Residues 179–181 (EME) and 203–204 (SN) contribute to the a purine D-ribonucleoside site.

Belongs to the PNP/UDP phosphorylase family. Homohexamer; trimer of homodimers.

It catalyses the reaction a purine D-ribonucleoside + phosphate = a purine nucleobase + alpha-D-ribose 1-phosphate. The catalysed reaction is a purine 2'-deoxy-D-ribonucleoside + phosphate = a purine nucleobase + 2-deoxy-alpha-D-ribose 1-phosphate. Functionally, catalyzes the reversible phosphorolytic breakdown of the N-glycosidic bond in the beta-(deoxy)ribonucleoside molecules, with the formation of the corresponding free purine bases and pentose-1-phosphate. In Levilactobacillus brevis (strain ATCC 367 / BCRC 12310 / CIP 105137 / JCM 1170 / LMG 11437 / NCIMB 947 / NCTC 947) (Lactobacillus brevis), this protein is Purine nucleoside phosphorylase DeoD-type.